Consider the following 245-residue polypeptide: 1-(5-phosphoribosyl)-5-[(5-phosphoribosylamino)methylideneamino] imidazole-4-carboxamide isomerase (245 aa).

Catalysis depends on Asp-8, which acts as the Proton acceptor. The active-site Proton donor is the Asp-130.

Belongs to the HisA/HisF family.

Its subcellular location is the cytoplasm. The catalysed reaction is 1-(5-phospho-beta-D-ribosyl)-5-[(5-phospho-beta-D-ribosylamino)methylideneamino]imidazole-4-carboxamide = 5-[(5-phospho-1-deoxy-D-ribulos-1-ylimino)methylamino]-1-(5-phospho-beta-D-ribosyl)imidazole-4-carboxamide. Its pathway is amino-acid biosynthesis; L-histidine biosynthesis; L-histidine from 5-phospho-alpha-D-ribose 1-diphosphate: step 4/9. This Marinobacter nauticus (strain ATCC 700491 / DSM 11845 / VT8) (Marinobacter aquaeolei) protein is 1-(5-phosphoribosyl)-5-[(5-phosphoribosylamino)methylideneamino] imidazole-4-carboxamide isomerase.